A 309-amino-acid chain; its full sequence is Methionyl-tRNA formyltransferase (309 aa).

107–110 contributes to the (6S)-5,6,7,8-tetrahydrofolate binding site; sequence SLLP.

It belongs to the Fmt family.

It carries out the reaction L-methionyl-tRNA(fMet) + (6R)-10-formyltetrahydrofolate = N-formyl-L-methionyl-tRNA(fMet) + (6S)-5,6,7,8-tetrahydrofolate + H(+). Functionally, attaches a formyl group to the free amino group of methionyl-tRNA(fMet). The formyl group appears to play a dual role in the initiator identity of N-formylmethionyl-tRNA by promoting its recognition by IF2 and preventing the misappropriation of this tRNA by the elongation apparatus. The sequence is that of Methionyl-tRNA formyltransferase from Borrelia recurrentis (strain A1).